Here is a 497-residue protein sequence, read N- to C-terminus: O-acetyltransferase PaAT-1 (497 aa).

An N-linked (GlcNAc...) asparagine glycan is attached at N35. The next 9 membrane-spanning stretches (helical) occupy residues 69–89, 107–127, 157–177, 241–261, 278–298, 329–349, 375–395, 406–426, and 443–463; these read GISATCVVVHHCTLQWFGWHI, LLISGSPHVYIFFVISGYSLS, LFVPTTIVTFFCAIMTQLNWY, LWTLPVEFNSSMVLLMFLMAF, VLFQCFFIYWALFLFFSGMLI, AIGVGCFVLSLCALSTPHLAF, PIAAIGLVLTLDHHPFLQVLF, ISFALFLVHGPLLNTLGHALG, and VAISLTAMVFWLMTILLADFV.

It belongs to the acyltransferase 3 family.

It is found in the membrane. It participates in mycotoxin biosynthesis. Functionally, O-acetyltransferase; part of the 2 gene clusters that mediate the biosynthesis of fusicoccins, diterpene glucosides that display phytohormone-like activity and function as potent activators of plasma membrane H(+)-ATPases in plants by modifying 14-3-3 proteins and cause the plant disease constriction canker. The first step in the pathway is performed by the fusicoccadiene synthase PaFS that possesses both prenyl transferase and terpene cyclase activity, converting isopentenyl diphosphate and dimethylallyl diphosphate into geranylgeranyl diphosphate (GGDP) and successively converting GGDP into fusicocca-2,10(14)-diene, a precursor for fusicoccin H. The second step is the oxidation at the C-8 position by the cytochrome P450 monooxygenase PaP450-2 to yield fusicocca-2,10(14)-diene-8-beta-ol. The cytochrome P450 monooxygenase PaP450-1 then catalyzes the hydroxylation at the C-16 position to produce fusicocca-2,10(14)-diene-8-beta,16-diol. The dioxygenase fc-dox then catalyzes the 16-oxydation of fusicocca-2,10(14)-diene-8-beta,16-diol to yield an aldehyde (8-beta-hydroxyfusicocca-1,10(14)-dien-16-al). The short-chain dehydrogenase/reductase fc-sdr catalyzes the reduction of the aldehyde to yield fusicocca-1,10(14)-diene-8-beta,16-diol. The next step is the hydroxylation at C-9 performed by the cytochrome P450 monooxygenase PaP450-3 that leads to fusicoccin H aglycon which is glycosylated to fusicoccin H by the O-glycosyltransferase PaGT. Hydroxylation at C-12 by the cytochrome P450 monooxygenase PaP450-4 leads then to the production of fusicoccin Q and is followed by methylation by the O-methyltransferase PaMT to yield fusicoccin P. Fusicoccin P is further converted to fusicoccin J via prenylation by the O-glucose prenyltransferase PaPT. Cytochrome P450 monooxygenase PaP450-5 then performs hydroxylation at C-19 to yield dideacetyl-fusicoccin A which is acetylated to 3'-O-deacetyl-fusicoccin A by the O-acetyltransferase PaAT-2. Finally, a another acetylation by the O-acetyltransferase PaAT-1 yields fusicoccin A. This Phomopsis amygdali (Fusicoccum amygdali) protein is O-acetyltransferase PaAT-1.